We begin with the raw amino-acid sequence, 422 residues long: Retinoic acid receptor RXR-beta-B (422 aa).

The segment at 1-89 is modulating; it reads MNSLPPSTSA…SGPMLSQKRM (89 aa). NR C4-type zinc fingers lie at residues 90–110 and 126–150; these read CAICGDRSSGKHYGVYSCEGC and CRDNKECLVDKRQRNRCQYCRYQKC. A DNA-binding region (nuclear receptor) is located at residues 90–155; the sequence is CAICGDRSSG…RYQKCLAMGM (66 aa). Residues 156–178 form a hinge region; sequence KREAVQEERQKNKERDGDYECSS. Basic and acidic residues predominate over residues 161–173; the sequence is QEERQKNKERDGD. The tract at residues 161–182 is disordered; the sequence is QEERQKNKERDGDYECSSSANE. Residues 181-421 form the NR LBD domain; it reads NEEMPVEKIL…TFLMEMLESP (241 aa).

This sequence belongs to the nuclear hormone receptor family. NR2 subfamily. Homodimer. Heterodimer; with a rar molecule. Binds DNA preferentially as a rar/rxr heterodimer. Heterodimerizes with rarga. Shows uniform expression from the blastula to mid-gastrula stages. At 12 hours post-fertilization (hpf), expressed ubiquitously but more weakly. At 24 hpf, restricted to the ventral diencephalon, pharangeal endoderm and trunk and tail mesoderm; mesoderm expression is in medial cells of each somite along the dorsoventral axis, forming stripes. At 48 hpf, expressed in forebrain, eye, midbrain and anterior hindbrain.

Its subcellular location is the nucleus. In terms of biological role, receptor for retinoic acid. Retinoic acid receptors bind as heterodimers to their target response elements in response to their ligands, all-trans or 9-cis retinoic acid, and regulate gene expression in various biological processes. The rar/rxr heterodimers bind to the retinoic acid response elements (RARE) composed of tandem 5'-AGGTCA-3' sites known as DR1-DR5. The high affinity ligand for rxrs is 9-cis retinoic acid. In Danio rerio (Zebrafish), this protein is Retinoic acid receptor RXR-beta-B (rxrbb).